Consider the following 179-residue polypeptide: Large ribosomal subunit protein uL5 (179 aa).

It belongs to the universal ribosomal protein uL5 family. Part of the 50S ribosomal subunit; part of the 5S rRNA/L5/L18/L25 subcomplex. Contacts the 5S rRNA and the P site tRNA. Forms a bridge to the 30S subunit in the 70S ribosome.

Functionally, this is one of the proteins that bind and probably mediate the attachment of the 5S RNA into the large ribosomal subunit, where it forms part of the central protuberance. In the 70S ribosome it contacts protein S13 of the 30S subunit (bridge B1b), connecting the 2 subunits; this bridge is implicated in subunit movement. Contacts the P site tRNA; the 5S rRNA and some of its associated proteins might help stabilize positioning of ribosome-bound tRNAs. This is Large ribosomal subunit protein uL5 from Cellvibrio japonicus (strain Ueda107) (Pseudomonas fluorescens subsp. cellulosa).